Here is a 729-residue protein sequence, read N- to C-terminus: MNALVKNMNSEQSEAVRTTEGPLLIMAGAGSGKTRVLTHRIAYLLDEKDVSPYNILAITFTNKAAKEMKARVEHLVGEEAQVIWMSTFHSMCVRILRRDADRIGIERNFTIIDPTDQKSVIKDVLKSENIDSKRFEPRMFIGAISNLKNELKTPEDAQKEANDFHSQMVATVYKGYQRQLSRNEALDFDDLIMTTINLFERVPETLEYYQNKFQYIHVDEYQDTNKAQYTLVKLLANKFKNLCVVGDSDQSIYGWRGADIQNILSFEEDYPEAKTIFLEQNYRSTKNILNAANEVIKHNSERKPKGLWTANSGGDKIQYYEAMTERDEAEYVVKEIMKHQRSGKKYSEMAILYRTNAQSRVLEETFMKSNIPYTMVGGQKFYDRKEIKDLLSYLRVIANSNDDISLQRIINVPKRGIGPSSVEKIQTYALQNNISMFDALAEVDFIGLSKKVTQECISFYEMIQNLIKEQEFLEISEIVDEVLQKSGYRDMLDREQSIESRSRLENLDEFMSVPKDYEENTPLEEQSLINFLTDLSLVADIDEADTQNGVTLMTMHSAKGLEFPIVFIMGMEESLFPHIRAIKSEDDHEMEEERRICYVAITRAEELLYITNATTRMLFGRSQSNMPSRFLKEIPEDLLDSHTGQKRQTISPKSQPKRGFSKRTTSTKKQVSSSDWKVGDKVMHKAWGEGMVSNVNEKNGSVELDIIFKSEGPKRLLAQFAPITKKEDS.

Positions 6 to 285 constitute a UvrD-like helicase ATP-binding domain; the sequence is KNMNSEQSEA…IFLEQNYRST (280 aa). ATP contacts are provided by residues 30-35 and R283; that span reads GSGKTR. Positions 286–560 constitute a UvrD-like helicase C-terminal domain; the sequence is KNILNAANEV…TLMTMHSAKG (275 aa). Residues 641–677 are disordered; that stretch reads SHTGQKRQTISPKSQPKRGFSKRTTSTKKQVSSSDWK. Polar residues predominate over residues 662–675; that stretch reads KRTTSTKKQVSSSD.

Belongs to the helicase family. UvrD subfamily.

The catalysed reaction is Couples ATP hydrolysis with the unwinding of duplex DNA by translocating in the 3'-5' direction.. It carries out the reaction ATP + H2O = ADP + phosphate + H(+). In terms of biological role, essential helicase. This chain is ATP-dependent DNA helicase PcrA (pcrA), found in Staphylococcus epidermidis (strain ATCC 12228 / FDA PCI 1200).